A 443-amino-acid polypeptide reads, in one-letter code: Transcriptional adapter 2-alpha (443 aa).

Proline 6 is modified (phosphoserine; in variant Ser-6). Residues 12-69 (SDKPPCRGCSSYLMEPYIKCAECGPPPFFLCLQCFTRGFEYKKHQSDHTYEIMTSDFP) form a ZZ-type zinc finger. 8 residues coordinate Zn(2+): cysteine 17, cysteine 20, cysteine 31, cysteine 34, cysteine 42, cysteine 45, histidine 55, and histidine 59. The SANT domain maps to 70 to 122 (VLDPSWTAQEEMALLEAVMDCGFGNWQDVANQMCTKTKEECEKHYMKHFINNP). Glycyl lysine isopeptide (Lys-Gly) (interchain with G-Cter in SUMO2) cross-links involve residues lysine 132 and lysine 138. The tract at residues 348–372 (SPSIPMASNSGRRSAPPLNLTGLPG) is disordered. Residues 356-443 (NSGRRSAPPL…LIREGYITKG (88 aa)) enclose the SWIRM domain. The DNA-binding element occupies 426-435 (KTRKIYDFLI).

In terms of assembly, interacts with GCN5 and NR3C1. Associated with the P/CAF protein in the PCAF complex. Component of the PCAF complex, at least composed of TADA2L/ADA2, TADA3L/ADA3, TAF5L/PAF65-beta, TAF6L/PAF65-alpha, TAF10/TAFII30, TAF12/TAFII20, TAF9/TAFII31 and TRRAP. Component of the ADA2A-containing complex (ATAC), composed of KAT14, KAT2A, TADA2L, TADA3L, ZZ3, MBIP, WDR5, YEATS2, CCDC101 and DR1. Interacts with CCDC134. Expressed in all tissues, but most abundantly in testis.

The protein localises to the nucleus. It is found in the chromosome. Its function is as follows. Component of the ATAC complex, a complex with histone acetyltransferase activity on histones H3 and H4. Required for the function of some acidic activation domains, which activate transcription from a distant site. Binds double-stranded DNA. Binds dinucleosomes, probably at the linker region between neighboring nucleosomes. Plays a role in chromatin remodeling. May promote TP53/p53 'Lys-321' acetylation, leading to reduced TP53 stability and transcriptional activity. May also promote XRCC6 acetylation thus facilitating cell apoptosis in response to DNA damage. The protein is Transcriptional adapter 2-alpha (TADA2A) of Homo sapiens (Human).